We begin with the raw amino-acid sequence, 76 residues long: Exodeoxyribonuclease 7 small subunit (76 aa).

It belongs to the XseB family. Heterooligomer composed of large and small subunits.

It localises to the cytoplasm. The catalysed reaction is Exonucleolytic cleavage in either 5'- to 3'- or 3'- to 5'-direction to yield nucleoside 5'-phosphates.. Functionally, bidirectionally degrades single-stranded DNA into large acid-insoluble oligonucleotides, which are then degraded further into small acid-soluble oligonucleotides. The polypeptide is Exodeoxyribonuclease 7 small subunit (Staphylococcus epidermidis (strain ATCC 35984 / DSM 28319 / BCRC 17069 / CCUG 31568 / BM 3577 / RP62A)).